Here is a 116-residue protein sequence, read N- to C-terminus: POU domain, class 4, transcription factor 1 (116 aa).

Residues 1–54 (VTQADVGSALANLKIPGVGSLSQSTICRFESLTLSHNNMIALKPILQAWLEEAE) form the POU-specific domain. Residues 56–79 (AQREKMNKPELFNGGEKKRKRTSI) form a disordered region. The homeobox DNA-binding region spans 72 to 116 (KKRKRTSIAAPEKRSLEAYFAVQPRPSSEKIAAIAEKLDLKKNVV).

Belongs to the POU transcription factor family. Class-4 subfamily.

The protein localises to the nucleus. The protein resides in the cytoplasm. Its function is as follows. Multifunctional transcription factor with different regions mediating its different effects. Acts by binding (via its C-terminal domain) to sequences related to the consensus octamer motif 5'-ATGCAAAT-3' in the regulatory regions of its target genes. Regulates the expression of specific genes involved in differentiation and survival within a subset of neuronal lineages. It has been shown that activation of some of these genes requires its N-terminal domain, maybe through a neuronal-specific cofactor. The sequence is that of POU domain, class 4, transcription factor 1 (POU4F1) from Gallus gallus (Chicken).